Reading from the N-terminus, the 73-residue chain is Disintegrin cerastin (73 aa).

Residues 1–73 (EAGEECDCGT…ADCPRNGLYG (73 aa)) form the Disintegrin domain. Disulfide bonds link Cys-6–Cys-21, Cys-8–Cys-16, Cys-15–Cys-38, Cys-29–Cys-35, Cys-34–Cys-59, and Cys-47–Cys-66. Positions 51–53 (RGD) match the Cell attachment site motif.

It belongs to the venom metalloproteinase (M12B) family. P-II subfamily. P-IIa sub-subfamily. In terms of assembly, monomer (disintegrin). As to expression, expressed by the venom gland.

It localises to the secreted. In terms of biological role, inhibits fibrinogen interaction with platelets. Acts by binding to alpha-IIb/beta-3 (ITGA2B/ITGB3) on the platelet surface and inhibits aggregation induced by ADP, thrombin, platelet-activating factor and collagen. The protein is Disintegrin cerastin of Crotalus cerastes cerastes (Mojave desert sidewinder).